The sequence spans 688 residues: Ethylmalonyl-CoA mutase (688 aa).

The B12-binding domain occupies 530–659 (TPRLVVGKPG…VGLAKVVERA (130 aa)). Position 543 (His543) interacts with adenosylcob(III)alamin. The segment at 666-688 (DRADTEAGVPGAPKRNESGAQVF) is disordered.

The protein belongs to the methylmalonyl-CoA mutase family. Adenosylcob(III)alamin serves as cofactor.

It catalyses the reaction (2R)-ethylmalonyl-CoA = (2S)-methylsuccinyl-CoA. Functionally, radical enzyme that catalyzes the transformation of (2R)-ethylmalonyl-CoA to (2S)-methylsuccinyl-CoA. Is involved in the ethylmalonyl-CoA pathway for acetyl-CoA assimilation required for M.extorquens growth on one- and two-carbon compounds such as ethylamine, methanol or ethanol as sole carbon source. This enzyme acts as a regulatory metabolic control point in this pathway, that allows M.extorquens to efficiently restore metabolic balance when challenged with a sudden change in the growth substrate. This chain is Ethylmalonyl-CoA mutase, found in Methylorubrum extorquens (strain ATCC 14718 / DSM 1338 / JCM 2805 / NCIMB 9133 / AM1) (Methylobacterium extorquens).